A 148-amino-acid chain; its full sequence is D-aminoacyl-tRNA deacylase (148 aa).

The Gly-cisPro motif, important for rejection of L-amino acids motif lies at 137–138 (GP).

The protein belongs to the DTD family. In terms of assembly, homodimer.

The protein resides in the cytoplasm. It catalyses the reaction glycyl-tRNA(Ala) + H2O = tRNA(Ala) + glycine + H(+). The catalysed reaction is a D-aminoacyl-tRNA + H2O = a tRNA + a D-alpha-amino acid + H(+). Functionally, an aminoacyl-tRNA editing enzyme that deacylates mischarged D-aminoacyl-tRNAs. Also deacylates mischarged glycyl-tRNA(Ala), protecting cells against glycine mischarging by AlaRS. Acts via tRNA-based rather than protein-based catalysis; rejects L-amino acids rather than detecting D-amino acids in the active site. By recycling D-aminoacyl-tRNA to D-amino acids and free tRNA molecules, this enzyme counteracts the toxicity associated with the formation of D-aminoacyl-tRNA entities in vivo and helps enforce protein L-homochirality. The protein is D-aminoacyl-tRNA deacylase of Aquifex aeolicus (strain VF5).